The chain runs to 504 residues: Glucose-6-phosphate isomerase (504 aa).

Residue Glu-333 is the Proton donor of the active site. Residues His-364 and Lys-473 contribute to the active site.

Belongs to the GPI family.

The protein resides in the cytoplasm. It carries out the reaction alpha-D-glucose 6-phosphate = beta-D-fructose 6-phosphate. It participates in carbohydrate biosynthesis; gluconeogenesis. It functions in the pathway carbohydrate degradation; glycolysis; D-glyceraldehyde 3-phosphate and glycerone phosphate from D-glucose: step 2/4. Catalyzes the reversible isomerization of glucose-6-phosphate to fructose-6-phosphate. The polypeptide is Glucose-6-phosphate isomerase (Xanthomonas oryzae pv. oryzae (strain PXO99A)).